The chain runs to 279 residues: Tryptophan synthase alpha chain (279 aa).

Active-site proton acceptor residues include E50 and D61.

The protein belongs to the TrpA family. As to quaternary structure, tetramer of two alpha and two beta chains.

The catalysed reaction is (1S,2R)-1-C-(indol-3-yl)glycerol 3-phosphate + L-serine = D-glyceraldehyde 3-phosphate + L-tryptophan + H2O. It functions in the pathway amino-acid biosynthesis; L-tryptophan biosynthesis; L-tryptophan from chorismate: step 5/5. Its function is as follows. The alpha subunit is responsible for the aldol cleavage of indoleglycerol phosphate to indole and glyceraldehyde 3-phosphate. The polypeptide is Tryptophan synthase alpha chain (Rhizobium etli (strain ATCC 51251 / DSM 11541 / JCM 21823 / NBRC 15573 / CFN 42)).